Consider the following 273-residue polypeptide: Glutamate 5-kinase (273 aa).

ATP is bound at residue Lys15. Substrate is bound by residues Ser55, Asp142, and Asn158. Residues 178-179 (SD) and 220-226 (TGGMLSK) each bind ATP.

Belongs to the glutamate 5-kinase family.

The protein resides in the cytoplasm. The catalysed reaction is L-glutamate + ATP = L-glutamyl 5-phosphate + ADP. Its pathway is amino-acid biosynthesis; L-proline biosynthesis; L-glutamate 5-semialdehyde from L-glutamate: step 1/2. Catalyzes the transfer of a phosphate group to glutamate to form L-glutamate 5-phosphate. The polypeptide is Glutamate 5-kinase (Streptococcus pyogenes serotype M18 (strain MGAS8232)).